The following is a 430-amino-acid chain: MFIDKAKIYLKAGKGGDGAVAFRREIYVPAGGPAGGDGGKGGNIIFQVDEGMRTLMDFRYQKHYSAENGEDGKNRNMYGKDGTDLVLKVPPGTIVREENTGEIIADLTGSEDQVVVARGGKGGKGNSHFKSSVRQAPRFAIAGERGQELTVVLELKLIADVGLVGFPNVGKSTLLSVVTSAKPKIANYHFTTLTPNLGVVRTKFGDSFVLADIPGLIEGAHEGTGLGHEFLRHVERTKLLIHVLDVAGLEGRDPLEDFEKINQELHLYNEKLAEKPQVVAANKTDIPGAEDNLEKLKAVLSERGIEVFPISAATSQGLDELLSYVSKRLKELEEIEALKADTAPKEEKVYKYEETEDKYHFTVTRENDVYIVEGRFIERLINSTNFDDIDSLSYFQKVLRNRGVIDRLKEAGISEGDLVKMYSVEFEYFN.

In terms of domain architecture, Obg spans Met-1–Ile-158. The OBG-type G domain occupies Ala-159 to Lys-330. GTP contacts are provided by residues Gly-165 to Ser-172, Phe-190 to Thr-194, Asp-212 to Gly-215, Asn-282 to Asp-285, and Ser-311 to Ala-313. Mg(2+) is bound by residues Ser-172 and Thr-192. The 80-residue stretch at Lys-351–Asn-430 folds into the OCT domain.

Belongs to the TRAFAC class OBG-HflX-like GTPase superfamily. OBG GTPase family. In terms of assembly, monomer. Mg(2+) is required as a cofactor.

It is found in the cytoplasm. Its function is as follows. An essential GTPase which binds GTP, GDP and possibly (p)ppGpp with moderate affinity, with high nucleotide exchange rates and a fairly low GTP hydrolysis rate. Plays a role in control of the cell cycle, stress response, ribosome biogenesis and in those bacteria that undergo differentiation, in morphogenesis control. The sequence is that of GTPase Obg from Alkaliphilus oremlandii (strain OhILAs) (Clostridium oremlandii (strain OhILAs)).